The primary structure comprises 306 residues: tRNA dimethylallyltransferase (306 aa).

2–9 is an ATP binding site; the sequence is GPTASGKT. 4–9 lines the substrate pocket; that stretch reads TASGKT. Interaction with substrate tRNA stretches follow at residues 27-30 and 152-156; these read DSVQ and QRIVR.

This sequence belongs to the IPP transferase family. As to quaternary structure, monomer. It depends on Mg(2+) as a cofactor.

It carries out the reaction adenosine(37) in tRNA + dimethylallyl diphosphate = N(6)-dimethylallyladenosine(37) in tRNA + diphosphate. Functionally, catalyzes the transfer of a dimethylallyl group onto the adenine at position 37 in tRNAs that read codons beginning with uridine, leading to the formation of N6-(dimethylallyl)adenosine (i(6)A). This Magnetococcus marinus (strain ATCC BAA-1437 / JCM 17883 / MC-1) protein is tRNA dimethylallyltransferase.